Consider the following 332-residue polypeptide: Ubiquinol oxidase 1a, mitochondrial (332 aa).

The N-terminal 54 residues, 1–54 (MSSRMAGSAILRHVGGVRLFTASATSPAAAAAAAARPFLAGGEAVPGVWGLRLM), are a transit peptide targeting the mitochondrion. Residues 157-177 (AMMLETVAAVPGMVGGMLLHL) form a helical membrane-spanning segment. Glu-161, Glu-200, and His-203 together coordinate Fe cation. A helical transmembrane segment spans residues 219–239 (ALVITVQGVFFNAYFLGYLLS). The Fe cation site is built by Glu-251, Glu-302, and His-305.

Belongs to the alternative oxidase family. In terms of assembly, homodimer; disulfide-linked. Fe cation serves as cofactor. Expressed in roots, leaf sheaths and leaf blades.

The protein localises to the mitochondrion inner membrane. It carries out the reaction 2 a ubiquinol + O2 = 2 a ubiquinone + 2 H2O. In terms of biological role, catalyzes the cyanide-resistant oxidation of ubiquinol and the reduction of molecular oxygen to water, but does not translocate protons and consequently is not linked to oxidative phosphorylation. May increase respiration when the cytochrome respiratory pathway is restricted, or in response to low temperatures. The protein is Ubiquinol oxidase 1a, mitochondrial of Oryza sativa subsp. japonica (Rice).